Reading from the N-terminus, the 299-residue chain is Acetylglutamate kinase (299 aa).

Substrate contacts are provided by residues 72-73, Arg-94, and Asn-196; that span reads GG.

This sequence belongs to the acetylglutamate kinase family. ArgB subfamily.

Its subcellular location is the cytoplasm. It carries out the reaction N-acetyl-L-glutamate + ATP = N-acetyl-L-glutamyl 5-phosphate + ADP. Its pathway is amino-acid biosynthesis; L-arginine biosynthesis; N(2)-acetyl-L-ornithine from L-glutamate: step 2/4. In terms of biological role, catalyzes the ATP-dependent phosphorylation of N-acetyl-L-glutamate. This is Acetylglutamate kinase from Burkholderia cenocepacia (strain HI2424).